The following is a 298-amino-acid chain: Protease HtpX homolog (298 aa).

Transmembrane regions (helical) follow at residues 14 to 34 (VVLL…AGYL) and 39 to 59 (YAMG…SMIF). Zn(2+) is bound at residue His143. Glu144 is an active-site residue. A Zn(2+)-binding site is contributed by His147. The next 2 membrane-spanning stretches (helical) occupy residues 158 to 178 (IAVA…RMLW) and 197 to 217 (IITL…ASLI). Glu226 provides a ligand contact to Zn(2+).

It belongs to the peptidase M48B family. It depends on Zn(2+) as a cofactor.

The protein resides in the cell membrane. The polypeptide is Protease HtpX homolog (Streptococcus pyogenes serotype M1).